The primary structure comprises 310 residues: Lipoyl synthase (310 aa).

[4Fe-4S] cluster contacts are provided by Cys51, Cys56, Cys62, Cys77, Cys81, Cys84, and Ser290. The 218-residue stretch at 63–280 (WSRKTATYLA…RRVGESLGLF (218 aa)) folds into the Radical SAM core domain.

The protein belongs to the radical SAM superfamily. Lipoyl synthase family. [4Fe-4S] cluster is required as a cofactor.

Its subcellular location is the cytoplasm. The catalysed reaction is [[Fe-S] cluster scaffold protein carrying a second [4Fe-4S](2+) cluster] + N(6)-octanoyl-L-lysyl-[protein] + 2 oxidized [2Fe-2S]-[ferredoxin] + 2 S-adenosyl-L-methionine + 4 H(+) = [[Fe-S] cluster scaffold protein] + N(6)-[(R)-dihydrolipoyl]-L-lysyl-[protein] + 4 Fe(3+) + 2 hydrogen sulfide + 2 5'-deoxyadenosine + 2 L-methionine + 2 reduced [2Fe-2S]-[ferredoxin]. It functions in the pathway protein modification; protein lipoylation via endogenous pathway; protein N(6)-(lipoyl)lysine from octanoyl-[acyl-carrier-protein]: step 2/2. Its function is as follows. Catalyzes the radical-mediated insertion of two sulfur atoms into the C-6 and C-8 positions of the octanoyl moiety bound to the lipoyl domains of lipoate-dependent enzymes, thereby converting the octanoylated domains into lipoylated derivatives. This Chlamydia abortus (strain DSM 27085 / S26/3) (Chlamydophila abortus) protein is Lipoyl synthase.